The sequence spans 245 residues: 3-deoxy-manno-octulosonate cytidylyltransferase (245 aa).

Belongs to the KdsB family.

It is found in the cytoplasm. It catalyses the reaction 3-deoxy-alpha-D-manno-oct-2-ulosonate + CTP = CMP-3-deoxy-beta-D-manno-octulosonate + diphosphate. It functions in the pathway nucleotide-sugar biosynthesis; CMP-3-deoxy-D-manno-octulosonate biosynthesis; CMP-3-deoxy-D-manno-octulosonate from 3-deoxy-D-manno-octulosonate and CTP: step 1/1. It participates in bacterial outer membrane biogenesis; lipopolysaccharide biosynthesis. Its function is as follows. Activates KDO (a required 8-carbon sugar) for incorporation into bacterial lipopolysaccharide in Gram-negative bacteria. This is 3-deoxy-manno-octulosonate cytidylyltransferase from Rhodopseudomonas palustris (strain ATCC BAA-98 / CGA009).